A 183-amino-acid chain; its full sequence is uncharacterized protein (183 aa).

Lys21 is covalently cross-linked (Glycyl lysine isopeptide (Lys-Gly) (interchain with G-Cter in ubiquitin)). Disordered regions lie at residues 24–111 and 160–183; these read NTTT…QNDN and PQSI…TRRP. Over residues 99-108 the composition is skewed to low complexity; sequence QQQQQQQQQQ. Residues 170-183 show a composition bias toward polar residues; sequence LPPSNASNTTTRRP.

Its subcellular location is the cytoplasm. This is an uncharacterized protein from Saccharomyces cerevisiae (strain ATCC 204508 / S288c) (Baker's yeast).